The primary structure comprises 543 residues: Glucose-6-phosphate isomerase (543 aa).

Glu353 functions as the Proton donor in the catalytic mechanism. Active-site residues include His384 and Lys504.

It belongs to the GPI family.

The protein resides in the cytoplasm. The enzyme catalyses alpha-D-glucose 6-phosphate = beta-D-fructose 6-phosphate. It participates in carbohydrate biosynthesis; gluconeogenesis. It functions in the pathway carbohydrate degradation; glycolysis; D-glyceraldehyde 3-phosphate and glycerone phosphate from D-glucose: step 2/4. Its function is as follows. Catalyzes the reversible isomerization of glucose-6-phosphate to fructose-6-phosphate. This chain is Glucose-6-phosphate isomerase, found in Roseiflexus castenholzii (strain DSM 13941 / HLO8).